The sequence spans 1410 residues: ABC transporter C family member 13 (1410 aa).

8 helical membrane-spanning segments follow: residues 23–43 (IVLGFGANVVTLLLILILTIT), 60–80 (LLYVTPALGACLSCVDLVLLV), 88–108 (VILCFVPLSGFVMWIAVILSL), 122–142 (ILCFWWIFRFLTDALHLNMIF), 148–168 (QEICLIMLDIAFGISINVLRI), 391–411 (LSGLAITILLIPVNKWISVLI), 474–494 (VFFWATTPTLFSLCTFGLFAL), and 505–525 (FTCLALFNSLISPLNSFPWVI). An ABC transmembrane type-1 1 domain is found at 255–530 (CNNYSTPSLI…FPWVINGLID (276 aa)). The ABC transporter 1 domain maps to 564-791 (VCVEDASCTW…ISPTFSLTNE (228 aa)). ATP is bound at residue 602 to 609 (GEVGSGKT). 6 helical membrane passes run 844–864 (AVFSGWFITIVILVSAVLMQG), 889–909 (TSFYLMVLCIFCIINSILTLV), 963–985 (SLPFILNILLANFVGLLGIIVVL), 990–1009 (VLFLLLLLPFWYIYSKLQVF), 1087–1107 (IVLFVAVMAVLGSGGNFPISF), and 1111–1131 (GLVGLALSYAAPLVSLLGSLL). Residues 852-1139 (TIVILVSAVL…LLTSFTETEK (288 aa)) enclose the ABC transmembrane type-1 2 domain. Positions 1174 to 1407 (VEFHNVTMRY…DSSTFSSFVR (234 aa)) constitute an ABC transporter 2 domain. Residue 1208–1215 (GRTGAGKS) participates in ATP binding.

The protein belongs to the ABC transporter superfamily. ABCC family. Conjugate transporter (TC 3.A.1.208) subfamily. As to expression, ubiquitous.

The protein localises to the membrane. The enzyme catalyses ATP + H2O + xenobioticSide 1 = ADP + phosphate + xenobioticSide 2.. In terms of biological role, pump for glutathione S-conjugates. This Arabidopsis thaliana (Mouse-ear cress) protein is ABC transporter C family member 13 (ABCC13).